The following is a 1481-amino-acid chain: DNA-directed RNA polymerase subunit beta'' (1481 aa).

Zn(2+) contacts are provided by Cys217, Cys291, Cys298, and Cys301.

It belongs to the RNA polymerase beta' chain family. RpoC2 subfamily. In plastids the minimal PEP RNA polymerase catalytic core is composed of four subunits: alpha, beta, beta', and beta''. When a (nuclear-encoded) sigma factor is associated with the core the holoenzyme is formed, which can initiate transcription. It depends on Zn(2+) as a cofactor.

The protein resides in the plastid. It is found in the chloroplast. It catalyses the reaction RNA(n) + a ribonucleoside 5'-triphosphate = RNA(n+1) + diphosphate. In terms of biological role, DNA-dependent RNA polymerase catalyzes the transcription of DNA into RNA using the four ribonucleoside triphosphates as substrates. The sequence is that of DNA-directed RNA polymerase subunit beta'' from Trieres chinensis (Marine centric diatom).